A 230-amino-acid polypeptide reads, in one-letter code: Heptaprenylglyceryl phosphate synthase (230 aa).

K12 lines the sn-glycerol 1-phosphate pocket. Mg(2+) is bound by residues D14 and T40. Residues Y159 to G164, G189, and G209 to D210 each bind sn-glycerol 1-phosphate.

Belongs to the GGGP/HepGP synthase family. Group I subfamily. In terms of assembly, homodimer. Requires Mg(2+) as cofactor.

The catalysed reaction is sn-glycerol 1-phosphate + all-trans-heptaprenyl diphosphate = 3-heptaprenyl-sn-glycero-1-phosphate + diphosphate. It participates in membrane lipid metabolism; glycerophospholipid metabolism. Prenyltransferase that catalyzes in vivo the transfer of the heptaprenyl moiety of heptaprenyl pyrophosphate (HepPP; 35 carbon atoms) to the C3 hydroxyl of sn-glycerol-1-phosphate (G1P), producing heptaprenylglyceryl phosphate (HepGP). This reaction is an ether-bond-formation step in the biosynthesis of archaea-type G1P-based membrane lipids found in Bacillales. To a much lesser extent, is also able to use geranylgeranyl diphosphate (GGPP; C20) as the prenyl donor. The polypeptide is Heptaprenylglyceryl phosphate synthase (Staphylococcus aureus (strain NCTC 8325 / PS 47)).